We begin with the raw amino-acid sequence, 185 residues long: Ribosome-recycling factor (185 aa).

Belongs to the RRF family.

The protein localises to the cytoplasm. Its function is as follows. Responsible for the release of ribosomes from messenger RNA at the termination of protein biosynthesis. May increase the efficiency of translation by recycling ribosomes from one round of translation to another. This is Ribosome-recycling factor from Bacillus mycoides (strain KBAB4) (Bacillus weihenstephanensis).